The following is a 236-amino-acid chain: Small ribosomal subunit protein uS5 (236 aa).

Positions Glu-61–Ile-124 constitute an S5 DRBM domain.

The protein belongs to the universal ribosomal protein uS5 family. Part of the 30S ribosomal subunit. Contacts protein S4.

In terms of biological role, with S4 and S12 plays an important role in translational accuracy. The chain is Small ribosomal subunit protein uS5 from Pyrococcus furiosus (strain ATCC 43587 / DSM 3638 / JCM 8422 / Vc1).